Here is a 374-residue protein sequence, read N- to C-terminus: WAT1-related protein At1g60050 (374 aa).

10 helical membrane passes run Ile11 to Ala31, Phe42 to Tyr62, Ile82 to Ser102, Ile107 to Leu127, Ile145 to Ile165, Trp194 to Ile214, Val228 to Glu248, Glu255 to Ile275, Val292 to Val312, and Leu315 to Trp335. Positions Ala26–Phe155 constitute an EamA domain.

It belongs to the drug/metabolite transporter (DMT) superfamily. Plant drug/metabolite exporter (P-DME) (TC 2.A.7.4) family.

Its subcellular location is the membrane. This is WAT1-related protein At1g60050 from Arabidopsis thaliana (Mouse-ear cress).